A 116-amino-acid chain; its full sequence is Putative membrane protein insertion efficiency factor (116 aa).

The protein belongs to the UPF0161 family.

It is found in the cell inner membrane. Could be involved in insertion of integral membrane proteins into the membrane. This is Putative membrane protein insertion efficiency factor from Bartonella tribocorum (strain CIP 105476 / IBS 506).